Here is a 419-residue protein sequence, read N- to C-terminus: MYKLIIHGGISLNGSVITAGSKNSSLPILFASILANGPITLTNTPHLSDVSTTLRLLMDMGAEFILESDNSLFINGSKLTNLVAQYNLVKTMRASILALGPMLAKYGKAKISLPGGCAIGPRPVNLHLEALENLGATIKVKNGYIYATAKELIGTKIHFKQISVTATENIIMAATLATGITTIYNAAQEPEIVDLVKCLIKMGAIISGAGTSIIIIQGVDELSGVTYSVCPDRIEAGTYLVATAITGGKITIKNVHYQSMHAILEKLLETGADIKTNKNSIILDMKGKRPRAVNIKTSTYPNFPTDMQAQFTALNAIADGYSTITETIFENRFMHIPELSRMGANLVLKGNTVVCKGVKYLTGMPLIATDLRASASLVLAGLVATGTTTIERVYHLDRGYETIEEKLKLLGAQIERVQD.

A phosphoenolpyruvate-binding site is contributed by 22–23; the sequence is KN. Residue Arg93 coordinates UDP-N-acetyl-alpha-D-glucosamine. Cys117 (proton donor) is an active-site residue. Cys117 carries the 2-(S-cysteinyl)pyruvic acid O-phosphothioketal modification. Residues Asp306 and Ile328 each contribute to the UDP-N-acetyl-alpha-D-glucosamine site.

The protein belongs to the EPSP synthase family. MurA subfamily.

The protein resides in the cytoplasm. The enzyme catalyses phosphoenolpyruvate + UDP-N-acetyl-alpha-D-glucosamine = UDP-N-acetyl-3-O-(1-carboxyvinyl)-alpha-D-glucosamine + phosphate. Its pathway is cell wall biogenesis; peptidoglycan biosynthesis. In terms of biological role, cell wall formation. Adds enolpyruvyl to UDP-N-acetylglucosamine. This chain is UDP-N-acetylglucosamine 1-carboxyvinyltransferase, found in Vesicomyosocius okutanii subsp. Calyptogena okutanii (strain HA).